Here is a 262-residue protein sequence, read N- to C-terminus: Ribose-5-phosphate isomerase A (262 aa).

Residues 33–36, 89–92, and 102–105 each bind substrate; these read TGST, DGAD, and KGGG. The active-site Proton acceptor is glutamate 111. Lysine 129 provides a ligand contact to substrate.

Belongs to the ribose 5-phosphate isomerase family. As to quaternary structure, homodimer.

The catalysed reaction is aldehydo-D-ribose 5-phosphate = D-ribulose 5-phosphate. It functions in the pathway carbohydrate degradation; pentose phosphate pathway; D-ribose 5-phosphate from D-ribulose 5-phosphate (non-oxidative stage): step 1/1. Its function is as follows. Catalyzes the reversible conversion of ribose-5-phosphate to ribulose 5-phosphate. The chain is Ribose-5-phosphate isomerase A from Roseobacter denitrificans (strain ATCC 33942 / OCh 114) (Erythrobacter sp. (strain OCh 114)).